Reading from the N-terminus, the 434-residue chain is 3-phosphoshikimate 1-carboxyvinyltransferase (434 aa).

3 residues coordinate 3-phosphoshikimate: Lys22, Ser23, and Arg27. Lys22 provides a ligand contact to phosphoenolpyruvate. Gly93 and Arg121 together coordinate phosphoenolpyruvate. The 3-phosphoshikimate site is built by Ser168, Ser169, Gln170, Ser199, Asp320, and Lys347. Position 170 (Gln170) interacts with phosphoenolpyruvate. The active-site Proton acceptor is Asp320. Phosphoenolpyruvate is bound by residues Arg351, Arg394, and Lys419.

Belongs to the EPSP synthase family. Monomer.

It is found in the cytoplasm. It carries out the reaction 3-phosphoshikimate + phosphoenolpyruvate = 5-O-(1-carboxyvinyl)-3-phosphoshikimate + phosphate. Its pathway is metabolic intermediate biosynthesis; chorismate biosynthesis; chorismate from D-erythrose 4-phosphate and phosphoenolpyruvate: step 6/7. In terms of biological role, catalyzes the transfer of the enolpyruvyl moiety of phosphoenolpyruvate (PEP) to the 5-hydroxyl of shikimate-3-phosphate (S3P) to produce enolpyruvyl shikimate-3-phosphate and inorganic phosphate. The chain is 3-phosphoshikimate 1-carboxyvinyltransferase from Burkholderia ambifaria (strain ATCC BAA-244 / DSM 16087 / CCUG 44356 / LMG 19182 / AMMD) (Burkholderia cepacia (strain AMMD)).